A 354-amino-acid chain; its full sequence is MQTYGNPDVTYDYWAGNASVTNRSGRFIASHAAHTGMIAFGAGSNTLFELSRFDSSLPMGDQGFVFLPHLASVGIGFDEAGVWTGAGVVTLAILHLILSMVYGAGGLLHAIYFPDDMQKSNVPQARKFKLEWDNPDNQTFILGHHLILFGLACAWFVEWARIHGIYDPAIGAVRQVNYNLDLSMIWERQVNFLNIDSLEDVMGGHAFLAFAEITGGCFHAIAGSTKWEDKRLGEYDRLKGAGLLSAEAILSFSLAGIGWMAIVAAFWCSQNTTVYPIEFYGEPLNRAFVIAPAFVDSIDYSNGIAPLGHSGRCYTANFHYIAGFFAFQGHLWHALRAMGYNFKDLRAKLNPSAA.

Helical transmembrane passes span 27 to 47, 88 to 108, 140 to 160, 201 to 221, 248 to 268, and 315 to 335; these read FIAS…SNTL, VVTL…GGLL, FILG…VEWA, VMGG…FHAI, AILS…AFWC, and TANF…WHAL.

Belongs to the PsbB/PsbC family. IsiA/Pcb subfamily. The antenna complex consists of divinyl chlorophylls (a and b) and divinyl chlorophyll a/b binding proteins and binds more divinyl chlorophyll b than does the antenna complex from high-light-adapted Prochlorococcus. The cofactor is divinyl chlorophyll a. Requires divinyl chlorophyll b as cofactor.

It is found in the cellular thylakoid membrane. In terms of biological role, the antenna complex functions as a light receptor, it captures and delivers excitation energy to photosystems II and I. The Prochlorales pcb genes are not related to higher plant LHCs. The polypeptide is Divinyl chlorophyll a/b light-harvesting protein PcbF (pcbF) (Prochlorococcus marinus (strain SARG / CCMP1375 / SS120)).